The following is a 305-amino-acid chain: MTRKLEIPESRDLPDWSHIGGGKVRELYVHRQYKNILLMFASNRVSAFDFVLEPEIPEKGRMLTQMSNWWFRKLPAENHLLENYDQELYRDLASHIPSHILERSTICRKMDIIPFEFVIRGYLTGSAWADYLENNTVYGIKLKGKFRQGDRLPGPIFTPTTKSRTKDTPVRYEDLVNAIGLSHAQQLREMCTDYYTTAEQIARNKGLIIADAKFEFGIAEGKAYLADELLTADSARYWDINSWGQFDLPIERRLDSFDKQAVRDWVKCNSGKNITPQNITPLRLPQELIQTVYKKYKTLLAKLTG.

This sequence belongs to the SAICAR synthetase family.

The enzyme catalyses 5-amino-1-(5-phospho-D-ribosyl)imidazole-4-carboxylate + L-aspartate + ATP = (2S)-2-[5-amino-1-(5-phospho-beta-D-ribosyl)imidazole-4-carboxamido]succinate + ADP + phosphate + 2 H(+). It functions in the pathway purine metabolism; IMP biosynthesis via de novo pathway; 5-amino-1-(5-phospho-D-ribosyl)imidazole-4-carboxamide from 5-amino-1-(5-phospho-D-ribosyl)imidazole-4-carboxylate: step 1/2. In Tropheryma whipplei (strain TW08/27) (Whipple's bacillus), this protein is Phosphoribosylaminoimidazole-succinocarboxamide synthase.